A 140-amino-acid polypeptide reads, in one-letter code: ATP synthase epsilon chain (140 aa).

It belongs to the ATPase epsilon chain family. F-type ATPases have 2 components, CF(1) - the catalytic core - and CF(0) - the membrane proton channel. CF(1) has five subunits: alpha(3), beta(3), gamma(1), delta(1), epsilon(1). CF(0) has three main subunits: a, b and c.

It localises to the cell inner membrane. In terms of biological role, produces ATP from ADP in the presence of a proton gradient across the membrane. In Bdellovibrio bacteriovorus (strain ATCC 15356 / DSM 50701 / NCIMB 9529 / HD100), this protein is ATP synthase epsilon chain.